The primary structure comprises 122 residues: Large ribosomal subunit protein uL14 (122 aa).

This sequence belongs to the universal ribosomal protein uL14 family. As to quaternary structure, part of the 50S ribosomal subunit. Forms a cluster with proteins L3 and L19. In the 70S ribosome, L14 and L19 interact and together make contacts with the 16S rRNA in bridges B5 and B8.

Functionally, binds to 23S rRNA. Forms part of two intersubunit bridges in the 70S ribosome. In Streptococcus agalactiae serotype Ia (strain ATCC 27591 / A909 / CDC SS700), this protein is Large ribosomal subunit protein uL14.